A 351-amino-acid polypeptide reads, in one-letter code: ATP-dependent protease ATP-binding subunit-like protein (351 aa).

Residues 1-26 form a disordered region; sequence MPYITDMLRDRNSAATPPAEERSEPV. Residue 79–86 coordinates ATP; the sequence is GPTGVGKT.

The protein belongs to the ClpA/ClpB family.

The chain is ATP-dependent protease ATP-binding subunit-like protein from Rhodococcus erythropolis (Arthrobacter picolinophilus).